Here is a 144-residue protein sequence, read N- to C-terminus: MAARNTARKRAFQILFEGDQRGVDVLTVLADWIRHSRTDTRQPPVSEYTMQLVEGYAKKVNRIDELISQYAVGWTLDRMPVVDRNILRLGTYELLWVDETPDAVVLDEAVQLAKEFSTDDSPAFVNGLLGRLKELKPSLRREEA.

This sequence belongs to the NusB family.

Its function is as follows. Involved in transcription antitermination. Required for transcription of ribosomal RNA (rRNA) genes. Binds specifically to the boxA antiterminator sequence of the ribosomal RNA (rrn) operons. This Streptomyces avermitilis (strain ATCC 31267 / DSM 46492 / JCM 5070 / NBRC 14893 / NCIMB 12804 / NRRL 8165 / MA-4680) protein is Transcription antitermination protein NusB.